Here is a 162-residue protein sequence, read N- to C-terminus: Peptide deformylase (162 aa).

Fe cation contacts are provided by Cys-91 and His-133. Residue Glu-134 is part of the active site. His-137 is a Fe cation binding site.

Belongs to the polypeptide deformylase family. It depends on Fe(2+) as a cofactor.

It carries out the reaction N-terminal N-formyl-L-methionyl-[peptide] + H2O = N-terminal L-methionyl-[peptide] + formate. Removes the formyl group from the N-terminal Met of newly synthesized proteins. Requires at least a dipeptide for an efficient rate of reaction. N-terminal L-methionine is a prerequisite for activity but the enzyme has broad specificity at other positions. The chain is Peptide deformylase from Finegoldia magna (strain ATCC 29328 / DSM 20472 / WAL 2508) (Peptostreptococcus magnus).